The primary structure comprises 745 residues: Elongation factor G, mitochondrial (745 aa).

The transit peptide at 1–15 (MSLITRLLTASSPLR) directs the protein to the mitochondrion. One can recognise a tr-type G domain in the interval 40-317 (DKIRNIGISA…AVLEYLPNPG (278 aa)). Residues 49–56 (AHIDSGKT), 116–120 (DTPGH), and 170–173 (NKLD) contribute to the GTP site.

It belongs to the TRAFAC class translation factor GTPase superfamily. Classic translation factor GTPase family. EF-G/EF-2 subfamily.

It localises to the mitochondrion. It functions in the pathway protein biosynthesis; polypeptide chain elongation. In terms of biological role, mitochondrial GTPase that catalyzes the GTP-dependent ribosomal translocation step during translation elongation. During this step, the ribosome changes from the pre-translocational (PRE) to the post-translocational (POST) state as the newly formed A-site-bound peptidyl-tRNA and P-site-bound deacylated tRNA move to the P and E sites, respectively. Catalyzes the coordinated movement of the two tRNA molecules, the mRNA and conformational changes in the ribosome. Essential during development as it acts as a retrograde signal from mitochondria to the nucleus to slow down cell proliferation if mitochondrial energy output is low. This Drosophila ananassae (Fruit fly) protein is Elongation factor G, mitochondrial (ico).